Consider the following 321-residue polypeptide: 5,10-methylenetetrahydromethanopterin reductase (321 aa).

Belongs to the mer family.

The protein localises to the cytoplasm. It catalyses the reaction 5-methyl-5,6,7,8-tetrahydromethanopterin + oxidized coenzyme F420-(gamma-L-Glu)(n) + H(+) = 5,10-methylenetetrahydromethanopterin + reduced coenzyme F420-(gamma-L-Glu)(n). It participates in one-carbon metabolism; methanogenesis from CO(2); methyl-coenzyme M from 5,10-methylene-5,6,7,8-tetrahydromethanopterin: step 1/2. Its function is as follows. Catalyzes the reversible reduction of methylene-H(4)MPT to methyl-H(4)MPT. The sequence is that of 5,10-methylenetetrahydromethanopterin reductase from Methanothermobacter thermautotrophicus (strain ATCC 29096 / DSM 1053 / JCM 10044 / NBRC 100330 / Delta H) (Methanobacterium thermoautotrophicum).